A 545-amino-acid polypeptide reads, in one-letter code: MGDWRTISLPESDKILQYSSEIRMSPTSLLSSPSHSAANTLSGIVYNFCTEDNIEQCITYIDQELRTIGFPTVQAVSKNGDGRKLHLVSIVNCIHELLQRNSQNMRSKEEVETQLLKINGDLEHLQSIYQRQKDQMEATRRENCALQERDRQMQCKNRNLLQLLKNEKEEVQKLQNIIASRSTQFNHSVKRKEREYNKLKERLYQLVMDKRDKKISIDVLNYVGRADGKRTSWRTGKTDAKNEEEMYKVLLNDYEQRQKQLMVENAELKKVLQQMKKEMISILSQRKTKEKLDDSIGPVASDIEEDLADSSKENLSELSCEAVREQLVSSIRQQWRILKSHMEKLDNQATPDENGMIARGDHEQELGKLINEIQQCKETIKIQQQLLKQQFSVPRDDTSTLLQDCYLLEDKERLQEEWKLFNEQKKNFEKERRNFTEAAIRLGHEKKAFEEDRAAWLKHQFLNMTVFTDHKNSEEKRAHGVHFSPEQDHCRLHSRTHDRHLASSGDHYQRPRKTLPITPSSKHSLTQRESVAWRDSSISPNGTDF.

2 coiled-coil regions span residues Arg106–Lys287 and Ala358–Leu442. The interval His497–Phe545 is disordered. 2 stretches are compositionally biased toward polar residues: residues Ile517–Glu529 and Ser536–Phe545.

It belongs to the ADIP family. Interacts with WRAP73.

The protein resides in the cell junction. It is found in the adherens junction. It localises to the cytoplasm. The protein localises to the cytoskeleton. Its subcellular location is the microtubule organizing center. The protein resides in the centrosome. It is found in the centriolar satellite. Functionally, belongs to an adhesion system, which plays a role in the organization of homotypic, interneuronal and heterotypic cell-cell adherens junctions (AJs). Involved in cell movement. Acts as a centrosome maturation factor, probably by maintaining the integrity of the pericentriolar material and proper microtubule nucleation at mitotic spindle poles. The function seems to implicate at least in part WRAP73; the SSX2IP:WRAP73 complex is proposed to act as regulator of spindle anchoring at the mitotic centrosome. This chain is Afadin- and alpha-actinin-binding protein B (ssx2ip-b), found in Xenopus laevis (African clawed frog).